Here is a 157-residue protein sequence, read N- to C-terminus: S-ribosylhomocysteine lyase (157 aa).

H53, H57, and C124 together coordinate Fe cation.

The protein belongs to the LuxS family. Homodimer. Fe cation serves as cofactor.

It carries out the reaction S-(5-deoxy-D-ribos-5-yl)-L-homocysteine = (S)-4,5-dihydroxypentane-2,3-dione + L-homocysteine. Its function is as follows. Involved in the synthesis of autoinducer 2 (AI-2) which is secreted by bacteria and is used to communicate both the cell density and the metabolic potential of the environment. The regulation of gene expression in response to changes in cell density is called quorum sensing. Catalyzes the transformation of S-ribosylhomocysteine (RHC) to homocysteine (HC) and 4,5-dihydroxy-2,3-pentadione (DPD). The polypeptide is S-ribosylhomocysteine lyase (Borreliella afzelii (strain PKo) (Borrelia afzelii)).